The chain runs to 224 residues: 7-cyano-7-deazaguanine synthase (224 aa).

8–18 (LSGGMDSAAVI) contacts ATP. Zn(2+)-binding residues include Cys186, Cys196, Cys199, and Cys202.

The protein belongs to the QueC family. Zn(2+) is required as a cofactor.

The catalysed reaction is 7-carboxy-7-deazaguanine + NH4(+) + ATP = 7-cyano-7-deazaguanine + ADP + phosphate + H2O + H(+). It functions in the pathway purine metabolism; 7-cyano-7-deazaguanine biosynthesis. Its function is as follows. Catalyzes the ATP-dependent conversion of 7-carboxy-7-deazaguanine (CDG) to 7-cyano-7-deazaguanine (preQ(0)). This Xanthomonas campestris pv. campestris (strain 8004) protein is 7-cyano-7-deazaguanine synthase.